The following is a 334-amino-acid chain: MPTDAKRPLQLNDQGQLRHFISLDGLPRELLTEILDTADSFLEVGARAVKKVPLLRGKTVCNVFFENSTRTRTTFELAAQRLSADVISLNVSTSSTSKGETLTDTLRNLEAMAADMFVVRHSDSGAAHFIAEHVSPNVAVINGGDGRHAHPTQGMLDMLTIRRHKGNFEQLSVAIVGDILHSRVARSNMLALKTLGCPDIRVIAPRTLLPIGLEEQYGVRVFTNADEGLKDVDVVIMLRLQRERMQGGLLPSEGEFFKLYGLTEKRLKLAKPDAIVMHPGPINRGVEIESAVADGAQSVILNQVTYGIAIRMAVLSMAMSGQNTQRQLEQEDAE.

The carbamoyl phosphate site is built by R70 and T71. An L-aspartate-binding site is contributed by K98. Residues R120, H150, and Q153 each contribute to the carbamoyl phosphate site. L-aspartate contacts are provided by R183 and R239. Carbamoyl phosphate is bound by residues G280 and P281.

This sequence belongs to the aspartate/ornithine carbamoyltransferase superfamily. ATCase family. Heterododecamer (2C3:3R2) of six catalytic PyrB chains organized as two trimers (C3), and six regulatory PyrI chains organized as three dimers (R2).

It catalyses the reaction carbamoyl phosphate + L-aspartate = N-carbamoyl-L-aspartate + phosphate + H(+). The protein operates within pyrimidine metabolism; UMP biosynthesis via de novo pathway; (S)-dihydroorotate from bicarbonate: step 2/3. Catalyzes the condensation of carbamoyl phosphate and aspartate to form carbamoyl aspartate and inorganic phosphate, the committed step in the de novo pyrimidine nucleotide biosynthesis pathway. This is Aspartate carbamoyltransferase catalytic subunit from Pseudomonas aeruginosa (strain LESB58).